We begin with the raw amino-acid sequence, 745 residues long: Elongation factor G, mitochondrial (745 aa).

Residues 40-317 (ERIRNIGISA…AVLDYLPNPG (278 aa)) form the tr-type G domain. GTP-binding positions include 49–56 (AHIDSGKT), 116–120 (DTPGH), and 170–173 (NKLD).

It belongs to the TRAFAC class translation factor GTPase superfamily. Classic translation factor GTPase family. EF-G/EF-2 subfamily.

The protein resides in the mitochondrion. The protein operates within protein biosynthesis; polypeptide chain elongation. Mitochondrial GTPase that catalyzes the GTP-dependent ribosomal translocation step during translation elongation. During this step, the ribosome changes from the pre-translocational (PRE) to the post-translocational (POST) state as the newly formed A-site-bound peptidyl-tRNA and P-site-bound deacylated tRNA move to the P and E sites, respectively. Catalyzes the coordinated movement of the two tRNA molecules, the mRNA and conformational changes in the ribosome. Essential during development as it acts as a retrograde signal from mitochondria to the nucleus to slow down cell proliferation if mitochondrial energy output is low. The sequence is that of Elongation factor G, mitochondrial from Drosophila sechellia (Fruit fly).